The primary structure comprises 434 residues: 4-hydroxyphenylpyruvate dioxygenase (434 aa).

Positions 1-21 (MPPTPTTPAATGAAAAVTPEH) are disordered. Positions 7-19 (TPAATGAAAAVTP) are enriched in low complexity. VOC domains are found at residues 41–192 (SFHH…FLPG) and 208–368 (RFDH…IFTK). Residues His-211, His-293, and Glu-379 each coordinate Fe cation.

This sequence belongs to the 4HPPD family. Fe cation serves as cofactor.

It localises to the cytoplasm. The enzyme catalyses 3-(4-hydroxyphenyl)pyruvate + O2 = homogentisate + CO2. The protein operates within amino-acid degradation; L-phenylalanine degradation; acetoacetate and fumarate from L-phenylalanine: step 3/6. It functions in the pathway cofactor biosynthesis; prenylquinone biosynthesis. The polypeptide is 4-hydroxyphenylpyruvate dioxygenase (Hordeum vulgare (Barley)).